A 74-amino-acid chain; its full sequence is Small ribosomal subunit protein bS18 (74 aa).

This sequence belongs to the bacterial ribosomal protein bS18 family. In terms of assembly, part of the 30S ribosomal subunit. Forms a tight heterodimer with protein bS6.

Functionally, binds as a heterodimer with protein bS6 to the central domain of the 16S rRNA, where it helps stabilize the platform of the 30S subunit. This chain is Small ribosomal subunit protein bS18, found in Sphingopyxis alaskensis (strain DSM 13593 / LMG 18877 / RB2256) (Sphingomonas alaskensis).